The primary structure comprises 512 residues: Cytochrome P450 72A15 (512 aa).

A helical transmembrane segment spans residues 2–22; it reads EISVASVTISVVLAVVSWWIW. Cys460 contacts heme.

The protein belongs to the cytochrome P450 family. Heme serves as cofactor.

Its subcellular location is the membrane. This Arabidopsis thaliana (Mouse-ear cress) protein is Cytochrome P450 72A15 (CYP72A15).